The following is a 471-amino-acid chain: Glutamate--tRNA ligase (471 aa).

Residues 9 to 19 carry the 'HIGH' region motif; sequence PSPTGYLHVGG. Residues Cys-98, Cys-100, Cys-125, and His-127 each contribute to the Zn(2+) site. The 'KMSKS' region signature appears at 237 to 241; it reads KLSKR. Position 240 (Lys-240) interacts with ATP.

The protein belongs to the class-I aminoacyl-tRNA synthetase family. Glutamate--tRNA ligase type 1 subfamily. In terms of assembly, monomer. Requires Zn(2+) as cofactor.

It localises to the cytoplasm. The enzyme catalyses tRNA(Glu) + L-glutamate + ATP = L-glutamyl-tRNA(Glu) + AMP + diphosphate. Functionally, catalyzes the attachment of glutamate to tRNA(Glu) in a two-step reaction: glutamate is first activated by ATP to form Glu-AMP and then transferred to the acceptor end of tRNA(Glu). The sequence is that of Glutamate--tRNA ligase from Salmonella gallinarum (strain 287/91 / NCTC 13346).